We begin with the raw amino-acid sequence, 429 residues long: Aspartate--tRNA(Asp/Asn) ligase (429 aa).

An L-aspartate-binding site is contributed by E167. The aspartate stretch occupies residues 189–192 (QLYK). Residue R210 coordinates L-aspartate. ATP is bound by residues 210-212 (RAE) and E352. The Mg(2+) site is built by E352 and S355. Residues S355 and R359 each contribute to the L-aspartate site. An ATP-binding site is contributed by 400-403 (GLAR).

This sequence belongs to the class-II aminoacyl-tRNA synthetase family. Type 2 subfamily. As to quaternary structure, homodimer. Mg(2+) serves as cofactor.

It is found in the cytoplasm. The catalysed reaction is tRNA(Asx) + L-aspartate + ATP = L-aspartyl-tRNA(Asx) + AMP + diphosphate. In terms of biological role, aspartyl-tRNA synthetase with relaxed tRNA specificity since it is able to aspartylate not only its cognate tRNA(Asp) but also tRNA(Asn). Reaction proceeds in two steps: L-aspartate is first activated by ATP to form Asp-AMP and then transferred to the acceptor end of tRNA(Asp/Asn). This chain is Aspartate--tRNA(Asp/Asn) ligase, found in Sulfurisphaera tokodaii (strain DSM 16993 / JCM 10545 / NBRC 100140 / 7) (Sulfolobus tokodaii).